A 53-amino-acid chain; its full sequence is Light-harvesting protein B800/850/890 beta-1 chain (53 aa).

The Cytoplasmic portion of the chain corresponds to 1–19; the sequence is ADNMSLTGLSDEEAKEFHS. A bacteriochlorophyll is bound by residues histidine 18 and histidine 36. Residues 20-42 traverse the membrane as a helical segment; the sequence is IFMQSFLIFTAVAVVAHFLAWAW. Residues 43–53 are Periplasmic-facing; that stretch reads RPWIPGAEGYG.

This sequence belongs to the antenna complex beta subunit family. In terms of assembly, the core complex is formed by different alpha and beta chains, binding bacteriochlorophyll molecules, and arranged most probably in tetrameric structures disposed around the reaction center. The non-pigmented gamma chains may constitute additional components.

It is found in the cell inner membrane. Functionally, antenna complexes are light-harvesting systems, which transfer the excitation energy to the reaction centers. This is Light-harvesting protein B800/850/890 beta-1 chain from Halorhodospira halophila (strain DSM 244 / SL1) (Ectothiorhodospira halophila (strain DSM 244 / SL1)).